The chain runs to 665 residues: UvrABC system protein B (665 aa).

The Helicase ATP-binding domain maps to 25 to 176; the sequence is NSIEKGNRFQ…NQRQLLRDLV (152 aa). 38–45 contributes to the ATP binding site; sequence GATGTGKT. The short motif at 91–114 is the Beta-hairpin element; the sequence is YYDYYQPEAYIPVSDTYIEKSASI. Residues 429 to 595 form the Helicase C-terminal domain; sequence QVDDLLGEIK…PIVTRSSNAI (167 aa). The UVR domain occupies 626–661; that stretch reads PELIGQLEEQMKEAAKKLEFEEAAKYRDRIQHLRDK.

Belongs to the UvrB family. As to quaternary structure, forms a heterotetramer with UvrA during the search for lesions. Interacts with UvrC in an incision complex.

It is found in the cytoplasm. The UvrABC repair system catalyzes the recognition and processing of DNA lesions. A damage recognition complex composed of 2 UvrA and 2 UvrB subunits scans DNA for abnormalities. Upon binding of the UvrA(2)B(2) complex to a putative damaged site, the DNA wraps around one UvrB monomer. DNA wrap is dependent on ATP binding by UvrB and probably causes local melting of the DNA helix, facilitating insertion of UvrB beta-hairpin between the DNA strands. Then UvrB probes one DNA strand for the presence of a lesion. If a lesion is found the UvrA subunits dissociate and the UvrB-DNA preincision complex is formed. This complex is subsequently bound by UvrC and the second UvrB is released. If no lesion is found, the DNA wraps around the other UvrB subunit that will check the other stand for damage. The chain is UvrABC system protein B from Gloeothece citriformis (strain PCC 7424) (Cyanothece sp. (strain PCC 7424)).